A 160-amino-acid chain; its full sequence is Cytochrome b6-f complex subunit 4 (160 aa).

3 helical membrane passes run 36–56 (LLYIFPVVIFGTFACCIGLAV), 95–115 (LLGVLAMAAVPVGLLTVPFIE), and 131–151 (ILFLVGTLVAVWLGIGATFPI).

The protein belongs to the cytochrome b family. PetD subfamily. The 4 large subunits of the cytochrome b6-f complex are cytochrome b6, subunit IV (17 kDa polypeptide, petD), cytochrome f and the Rieske protein, while the 4 small subunits are petG, petL, petM and petN. The complex functions as a dimer.

It localises to the plastid. It is found in the chloroplast thylakoid membrane. Its function is as follows. Component of the cytochrome b6-f complex, which mediates electron transfer between photosystem II (PSII) and photosystem I (PSI), cyclic electron flow around PSI, and state transitions. The chain is Cytochrome b6-f complex subunit 4 from Chlamydomonas moewusii (Chlamydomonas eugametos).